Here is a 118-residue protein sequence, read N- to C-terminus: Large ribosomal subunit protein uL24 (118 aa).

It belongs to the universal ribosomal protein uL24 family. As to quaternary structure, part of the 50S ribosomal subunit.

Functionally, one of two assembly initiator proteins, it binds directly to the 5'-end of the 23S rRNA, where it nucleates assembly of the 50S subunit. One of the proteins that surrounds the polypeptide exit tunnel on the outside of the subunit. The protein is Large ribosomal subunit protein uL24 of Parasynechococcus marenigrum (strain WH8102).